Reading from the N-terminus, the 264-residue chain is Merozoite surface protein 2 (264 aa).

The N-terminal stretch at 1–20 is a signal peptide; that stretch reads MKVIKTLSIINFFIFVTFNI. Residues Asn-22 and Asn-36 are each glycosylated (N-linked (GlcNAc...) asparagine). The segment at 44 to 190 is polymorphic region; the sequence is ANEGSNTNSV…PQTAENENPA (147 aa). The disordered stretch occupies residues 46–227; it reads EGSNTNSVGA…QKECTDGNKE (182 aa). 2 tandem repeats follow at residues 60 to 91 and 92 to 123. The 2 X 32 AA perfects repeats stretch occupies residues 60 to 123; the sequence is ADTIASGSQR…GESQTTTPTA (64 aa). Residues 70 to 81 are compositionally biased toward low complexity; the sequence is STNSASTSTTNN. Residues 82 to 101 are compositionally biased toward polar residues; that stretch reads GESQTTTPTAADTIASGSQR. The span at 102–145 shows a compositional bias: low complexity; the sequence is STNSASTSTTNNGESQTTTPTAADTPTATESISPSPPITTTESS. Positions 154–166 are enriched in basic and acidic residues; it reads TDGKGEESEKQNE. Residue Asn-213 is glycosylated (N-linked (GlcNAc...) asparagine). The segment covering 217–226 has biased composition (basic and acidic residues); sequence SQKECTDGNK. A disulfide bridge connects residues Cys-221 and Cys-229. Residue Asn-238 is glycosylated (N-linked (GlcNAc...) asparagine). The GPI-anchor amidated asparagine moiety is linked to residue Asn-238. Residues 239-264 constitute a propeptide, removed in mature form; sequence SSNIASINKFVVLISATLVLSFAIFI.

The protein localises to the cell membrane. Its function is as follows. May play a role in the merozoite attachment to the erythrocyte. In Plasmodium falciparum (isolate FC27 / Papua New Guinea), this protein is Merozoite surface protein 2.